The following is a 389-amino-acid chain: MTKKILLLGSGELGKEFVIAAKRKGQYVIACDSYAGAPAMQVADEFEVFSMLDGDALDAVVAKHKPDIIVPEIEAIRTERLYHLEQEGIQVVPSARAVNFTMNRKAIRDLAAKELGLKTAKYFYAKSLEELQEAAKEIGFPCVVKPLMSSSGKGQSLVKSADELEQAWHYGCEGSRGDIKELIIEEFIQFDSEITLLTVTQKNGPTLFCPPIGHVQKGGDYRESFQPAHIDPEHLKEAQRMADKVTAALTGAGIWGVEFFLSHENGVYFSELSPRPHDTGMVTLAGTQNLNEFELHLRAVLGLPIPEITQERIGASAVILSPIASKEAPRYRGEEEVCKETNTYLRIFGKPYTKLNRRMGVVVCYAPNGSDLDALRDKCKAAAAKVEVY.

Residues 12-13 (EL) and glutamate 72 each bind N(1)-(5-phospho-beta-D-ribosyl)glycinamide. Residues arginine 104, lysine 145, 150 to 155 (SSGKGQ), 185 to 188 (EEFI), and glutamate 193 each bind ATP. The region spanning 109–301 (DLAAKELGLK…EFELHLRAVL (193 aa)) is the ATP-grasp domain. Mg(2+) is bound by residues glutamate 258 and glutamate 271. Residues aspartate 278, lysine 350, and 357-358 (RR) each bind N(1)-(5-phospho-beta-D-ribosyl)glycinamide.

Belongs to the PurK/PurT family. Homodimer.

The catalysed reaction is N(1)-(5-phospho-beta-D-ribosyl)glycinamide + formate + ATP = N(2)-formyl-N(1)-(5-phospho-beta-D-ribosyl)glycinamide + ADP + phosphate + H(+). It participates in purine metabolism; IMP biosynthesis via de novo pathway; N(2)-formyl-N(1)-(5-phospho-D-ribosyl)glycinamide from N(1)-(5-phospho-D-ribosyl)glycinamide (formate route): step 1/1. Functionally, involved in the de novo purine biosynthesis. Catalyzes the transfer of formate to 5-phospho-ribosyl-glycinamide (GAR), producing 5-phospho-ribosyl-N-formylglycinamide (FGAR). Formate is provided by PurU via hydrolysis of 10-formyl-tetrahydrofolate. This Phocaeicola vulgatus (strain ATCC 8482 / DSM 1447 / JCM 5826 / CCUG 4940 / NBRC 14291 / NCTC 11154) (Bacteroides vulgatus) protein is Formate-dependent phosphoribosylglycinamide formyltransferase.